The chain runs to 155 residues: Endoribonuclease YbeY (155 aa).

Residues His-118, His-122, and His-128 each coordinate Zn(2+).

The protein belongs to the endoribonuclease YbeY family. Zn(2+) serves as cofactor.

It is found in the cytoplasm. In terms of biological role, single strand-specific metallo-endoribonuclease involved in late-stage 70S ribosome quality control and in maturation of the 3' terminus of the 16S rRNA. The protein is Endoribonuclease YbeY of Bordetella petrii (strain ATCC BAA-461 / DSM 12804 / CCUG 43448).